The primary structure comprises 352 residues: Ribosomal RNA large subunit methyltransferase M (352 aa).

S-adenosyl-L-methionine contacts are provided by residues Ser-184, 217-220, Asp-236, Asp-256, and Asp-272; that span reads APGG. The Proton acceptor role is filled by Lys-301.

Belongs to the class I-like SAM-binding methyltransferase superfamily. RNA methyltransferase RlmE family. RlmM subfamily. Monomer.

The protein resides in the cytoplasm. It catalyses the reaction cytidine(2498) in 23S rRNA + S-adenosyl-L-methionine = 2'-O-methylcytidine(2498) in 23S rRNA + S-adenosyl-L-homocysteine + H(+). Its function is as follows. Catalyzes the 2'-O-methylation at nucleotide C2498 in 23S rRNA. The protein is Ribosomal RNA large subunit methyltransferase M of Pseudomonas aeruginosa (strain UCBPP-PA14).